Consider the following 692-residue polypeptide: Elongation factor G (692 aa).

A tr-type G domain is found at 9 to 284 (EKIRNIGIMA…AVVDYLPSPV (276 aa)). Residues 18–25 (AHIDAGKT), 82–86 (DTPGH), and 136–139 (NKMD) each bind GTP.

It belongs to the TRAFAC class translation factor GTPase superfamily. Classic translation factor GTPase family. EF-G/EF-2 subfamily.

The protein resides in the cytoplasm. Catalyzes the GTP-dependent ribosomal translocation step during translation elongation. During this step, the ribosome changes from the pre-translocational (PRE) to the post-translocational (POST) state as the newly formed A-site-bound peptidyl-tRNA and P-site-bound deacylated tRNA move to the P and E sites, respectively. Catalyzes the coordinated movement of the two tRNA molecules, the mRNA and conformational changes in the ribosome. The polypeptide is Elongation factor G (Neorickettsia sennetsu (strain ATCC VR-367 / Miyayama) (Ehrlichia sennetsu)).